Here is a 669-residue protein sequence, read N- to C-terminus: Elongation factor G 2 (669 aa).

The region spanning 1-276 (MGIRNIGIMA…SIVDYLPSPF (276 aa)) is the tr-type G domain. GTP is bound by residues 10–17 (AHIDAGKT), 74–78 (DTPGH), and 128–131 (NKMD).

This sequence belongs to the TRAFAC class translation factor GTPase superfamily. Classic translation factor GTPase family. EF-G/EF-2 subfamily.

The protein resides in the cytoplasm. Catalyzes the GTP-dependent ribosomal translocation step during translation elongation. During this step, the ribosome changes from the pre-translocational (PRE) to the post-translocational (POST) state as the newly formed A-site-bound peptidyl-tRNA and P-site-bound deacylated tRNA move to the P and E sites, respectively. Catalyzes the coordinated movement of the two tRNA molecules, the mRNA and conformational changes in the ribosome. In Borreliella afzelii (strain PKo) (Borrelia afzelii), this protein is Elongation factor G 2 (fusA2).